Consider the following 535-residue polypeptide: CTP synthase (535 aa).

The interval 1–268 (MPNKYIVVTG…VSKILSRLKL (268 aa)) is amidoligase domain. Ser14 lines the CTP pocket. Ser14 contacts UTP. 15–20 (SVGKGT) lines the ATP pocket. Position 55 (Tyr55) interacts with L-glutamine. Asp72 contacts ATP. Mg(2+) is bound by residues Asp72 and Glu142. CTP is bound by residues 149–151 (DIE), 189–194 (KTKPLQ), and Lys225. Residues 189–194 (KTKPLQ) and Lys225 each bind UTP. Position 243 (Val243) interacts with ATP. In terms of domain architecture, Glutamine amidotransferase type-1 spans 302–535 (YTKLKDSYIS…LGFIRAVASL (234 aa)). Gly359 serves as a coordination point for L-glutamine. The active-site Nucleophile; for glutamine hydrolysis is the Cys386. Residues 387-390 (FGFQ), Glu410, and Arg467 contribute to the L-glutamine site. Residues His511 and Glu513 contribute to the active site.

Belongs to the CTP synthase family. In terms of assembly, homotetramer in the presence of ATP and UTP. The enzyme dissociates into homodimers in the absence of substrate nucleotides.

It catalyses the reaction UTP + L-glutamine + ATP + H2O = CTP + L-glutamate + ADP + phosphate + 2 H(+). It carries out the reaction L-glutamine + H2O = L-glutamate + NH4(+). The enzyme catalyses UTP + NH4(+) + ATP = CTP + ADP + phosphate + 2 H(+). The protein operates within pyrimidine metabolism; CTP biosynthesis via de novo pathway; CTP from UDP: step 2/2. Allosterically activated by GTP, when glutamine is the substrate; GTP has no effect on the reaction when ammonia is the substrate. The allosteric effector GTP functions by stabilizing the protein conformation that binds the tetrahedral intermediate(s) formed during glutamine hydrolysis. Inhibited by the product CTP, via allosteric rather than competitive inhibition. Catalyzes the ATP-dependent amination of UTP to CTP with either L-glutamine or ammonia as the source of nitrogen. Regulates intracellular CTP levels through interactions with the four ribonucleotide triphosphates. This chain is CTP synthase, found in Saccharolobus solfataricus (strain ATCC 35092 / DSM 1617 / JCM 11322 / P2) (Sulfolobus solfataricus).